The sequence spans 562 residues: Arylsulfatase H (562 aa).

Residues Asp-15, Asp-16, and Cys-55 each coordinate Ca(2+). Cys-55 serves as the catalytic Nucleophile. Cys-55 is modified (3-oxoalanine (Cys)). Lys-115 is a substrate binding site. His-117 is an active-site residue. Helical transmembrane passes span 167–187 (LWIS…PKYA) and 189–209 (WFVV…LFFI). A substrate-binding site is contributed by His-271. Residues Asp-323 and Asn-324 each coordinate Ca(2+).

Belongs to the sulfatase family. It depends on Ca(2+) as a cofactor. Post-translationally, the conversion to 3-oxoalanine (also known as C-formylglycine, FGly), of a serine or cysteine residue in prokaryotes and of a cysteine residue in eukaryotes, is critical for catalytic activity.

Its subcellular location is the membrane. In Canis lupus familiaris (Dog), this protein is Arylsulfatase H (ARSH).